We begin with the raw amino-acid sequence, 311 residues long: 4-hydroxy-tetrahydrodipicolinate synthase (311 aa).

T51 is a binding site for pyruvate. Y140 acts as the Proton donor/acceptor in catalysis. K168 functions as the Schiff-base intermediate with substrate in the catalytic mechanism. Residue I209 participates in pyruvate binding.

Belongs to the DapA family. As to quaternary structure, homotetramer; dimer of dimers.

Its subcellular location is the cytoplasm. The enzyme catalyses L-aspartate 4-semialdehyde + pyruvate = (2S,4S)-4-hydroxy-2,3,4,5-tetrahydrodipicolinate + H2O + H(+). The protein operates within amino-acid biosynthesis; L-lysine biosynthesis via DAP pathway; (S)-tetrahydrodipicolinate from L-aspartate: step 3/4. Its function is as follows. Catalyzes the condensation of (S)-aspartate-beta-semialdehyde [(S)-ASA] and pyruvate to 4-hydroxy-tetrahydrodipicolinate (HTPA). The polypeptide is 4-hydroxy-tetrahydrodipicolinate synthase (Streptococcus pneumoniae (strain Hungary19A-6)).